The sequence spans 545 residues: CTP synthase (545 aa).

The interval 1–266 (MTTNYIFVTG…DDYICKRFSL (266 aa)) is amidoligase domain. S14 contacts CTP. A UTP-binding site is contributed by S14. Residues 15–20 (SLGKGI) and D72 contribute to the ATP site. Mg(2+)-binding residues include D72 and E140. CTP is bound by residues 147–149 (DIE), 187–192 (KTKPTQ), and K223. UTP contacts are provided by residues 187–192 (KTKPTQ) and K223. 239 to 241 (KDV) is a binding site for ATP. Residues 291–542 (TIGMIGKYVE…VKAAGEYQKR (252 aa)) enclose the Glutamine amidotransferase type-1 domain. G352 is a binding site for L-glutamine. The active-site Nucleophile; for glutamine hydrolysis is the C379. L-glutamine is bound by residues 380 to 383 (LGMQ), E403, and R470. Catalysis depends on residues H515 and E517.

This sequence belongs to the CTP synthase family. In terms of assembly, homotetramer.

The enzyme catalyses UTP + L-glutamine + ATP + H2O = CTP + L-glutamate + ADP + phosphate + 2 H(+). The catalysed reaction is L-glutamine + H2O = L-glutamate + NH4(+). It carries out the reaction UTP + NH4(+) + ATP = CTP + ADP + phosphate + 2 H(+). It participates in pyrimidine metabolism; CTP biosynthesis via de novo pathway; CTP from UDP: step 2/2. Its activity is regulated as follows. Allosterically activated by GTP, when glutamine is the substrate; GTP has no effect on the reaction when ammonia is the substrate. The allosteric effector GTP functions by stabilizing the protein conformation that binds the tetrahedral intermediate(s) formed during glutamine hydrolysis. Inhibited by the product CTP, via allosteric rather than competitive inhibition. Its function is as follows. Catalyzes the ATP-dependent amination of UTP to CTP with either L-glutamine or ammonia as the source of nitrogen. Regulates intracellular CTP levels through interactions with the four ribonucleotide triphosphates. The sequence is that of CTP synthase from Yersinia enterocolitica serotype O:8 / biotype 1B (strain NCTC 13174 / 8081).